Reading from the N-terminus, the 262-residue chain is Tryptophan synthase alpha chain (262 aa).

Residues glutamate 48 and aspartate 59 each act as proton acceptor in the active site.

This sequence belongs to the TrpA family. In terms of assembly, tetramer of two alpha and two beta chains.

It carries out the reaction (1S,2R)-1-C-(indol-3-yl)glycerol 3-phosphate + L-serine = D-glyceraldehyde 3-phosphate + L-tryptophan + H2O. It functions in the pathway amino-acid biosynthesis; L-tryptophan biosynthesis; L-tryptophan from chorismate: step 5/5. In terms of biological role, the alpha subunit is responsible for the aldol cleavage of indoleglycerol phosphate to indole and glyceraldehyde 3-phosphate. In Helicobacter pylori (strain HPAG1), this protein is Tryptophan synthase alpha chain.